Reading from the N-terminus, the 937-residue chain is Hyphally-regulated protein (937 aa).

Positions 1-20 (MKVVSNFIFTILLTLNLSAA) are cleaved as a signal peptide. N-linked (GlcNAc...) asparagine glycosylation occurs at Asn-16. A helical membrane pass occupies residues 42 to 62 (VHSGATWAILGTTLCSFFGGL). Asn-236 is a glycosylation site (N-linked (GlcNAc...) asparagine). The interval 332 to 483 (SAPESESDLN…QSITSSPGQS (152 aa)) is disordered. Residues 344-392 (TTSSIETSSYSSAATESSVVSESSSAVDSLTSSSLSSKSESSDVVSSTT) show a composition bias toward low complexity. The segment covering 393 to 414 (NIESSSTAIETTMNSESSTDAG) has biased composition (polar residues). Residues 415–475 (SSSISQSESS…SNALSSTEQS (61 aa)) are compositionally biased toward low complexity. 6 N-linked (GlcNAc...) asparagine glycosylation sites follow: Asn-449, Asn-488, Asn-580, Asn-585, Asn-595, and Asn-603. Residues 567-590 (DATTTTTTSTGGDNSTGGNESGSN) show a composition bias toward low complexity. The segment at 567 to 857 (DATTTTTTST…VANPVTTSTE (291 aa)) is disordered. The span at 591–609 (HGPGNGSTEGSGNGSGAGS) shows a compositional bias: gly residues. Repeat 1 spans residues 610–613 (NEGS). Residues 610-753 (NEGSQSGPNN…GAGNGSNEGS (144 aa)) are 7 X 4 AA repeats of N-E-G-S. N-linked (GlcNAc...) asparagine glycosylation is found at Asn-619, Asn-631, Asn-641, and Asn-649. Gly residues-rich tracts occupy residues 619-631 (NGSG…GSNN) and 641-665 (NGSG…GSGS). Repeat copies occupy residues 666–669 (NEGS), 680–683 (NEGS), 690–693 (NEGS), and 698–701 (NEGS). A compositionally biased stretch (low complexity) spans 666 to 682 (NEGSQSGSGSQPGPNEG). The span at 699 to 725 (EGSGSGSGSGSNNGSGSGSQSGSGSGS) shows a compositional bias: gly residues. Residue Asn-711 is glycosylated (N-linked (GlcNAc...) asparagine). Positions 726 to 742 (QSGSESGSNSGSNEGSN) are enriched in low complexity. Residues 738–741 (NEGS) form repeat 6. The segment covering 743–801 (PGAGNGSNEGSGQGSGNGSEAGSGQGSGPNNGSGSGHNDGSGSGSNQGSNPGAGSGSGS) has biased composition (gly residues). The N-linked (GlcNAc...) asparagine glycan is linked to Asn-747. Repeat 7 spans residues 750–753 (NEGS). 2 N-linked (GlcNAc...) asparagine glycosylation sites follow: Asn-759 and Asn-773. The segment covering 802-814 (ESGSKAGSHSGSN) has biased composition (low complexity). Positions 817-829 (AKTDSIEGFHTES) are enriched in basic and acidic residues. Residues 841 to 851 (ATVTGNSVANP) are compositionally biased toward polar residues. N-linked (GlcNAc...) asparagine glycans are attached at residues Asn-897 and Asn-913. Residue Asn-913 is the site of GPI-anchor amidated asparagine attachment. Residues 914 to 937 (GSSIVTGGKSILFGLIVSMVVLFM) constitute a propeptide, removed in mature form.

The protein resides in the cell membrane. It localises to the secreted. It is found in the cell wall. In terms of biological role, nonessential component of the hyphal cell wall. The protein is Hyphally-regulated protein (HYR1) of Candida albicans (Yeast).